The chain runs to 184 residues: NEDD8-conjugating enzyme Ubc12 (184 aa).

A UBC core domain is found at alanine 30–valine 175. The Glycyl thioester intermediate role is filled by cysteine 113.

Belongs to the ubiquitin-conjugating enzyme family. UBC12 subfamily. Interacts with RBX1. Expressed in shoot, root and floral meristems, and in vascular tissues of leaves.

The protein operates within protein modification; protein neddylation. Its function is as follows. Accepts the ubiquitin-like protein NEDD8/RUB1 from the ECR1-AXR1 E1 complex and catalyzes its covalent attachment to other proteins. This chain is NEDD8-conjugating enzyme Ubc12 (RCE1), found in Arabidopsis thaliana (Mouse-ear cress).